We begin with the raw amino-acid sequence, 396 residues long: Phosphoglycerate kinase (396 aa).

Residues Asp21 to Asn23, Arg37, His60 to Arg63, Arg121, and Arg154 each bind substrate. ATP contacts are provided by residues Lys205, Gly296, Glu327, and Gly353–Ser356.

Belongs to the phosphoglycerate kinase family. In terms of assembly, monomer.

The protein localises to the cytoplasm. It catalyses the reaction (2R)-3-phosphoglycerate + ATP = (2R)-3-phospho-glyceroyl phosphate + ADP. It participates in carbohydrate degradation; glycolysis; pyruvate from D-glyceraldehyde 3-phosphate: step 2/5. This Anaeromyxobacter dehalogenans (strain 2CP-1 / ATCC BAA-258) protein is Phosphoglycerate kinase.